Here is an 81-residue protein sequence, read N- to C-terminus: UPF0180 protein BLi01634/BL05144 (81 aa).

Belongs to the UPF0180 family.

This is UPF0180 protein BLi01634/BL05144 from Bacillus licheniformis (strain ATCC 14580 / DSM 13 / JCM 2505 / CCUG 7422 / NBRC 12200 / NCIMB 9375 / NCTC 10341 / NRRL NRS-1264 / Gibson 46).